The primary structure comprises 211 residues: Large ribosomal subunit protein bL25 (211 aa).

This sequence belongs to the bacterial ribosomal protein bL25 family. CTC subfamily. Part of the 50S ribosomal subunit; part of the 5S rRNA/L5/L18/L25 subcomplex. Contacts the 5S rRNA. Binds to the 5S rRNA independently of L5 and L18.

Functionally, this is one of the proteins that binds to the 5S RNA in the ribosome where it forms part of the central protuberance. This chain is Large ribosomal subunit protein bL25, found in Methylobacterium nodulans (strain LMG 21967 / CNCM I-2342 / ORS 2060).